The primary structure comprises 99 residues: Putative septation protein SpoVG (99 aa).

The protein belongs to the SpoVG family.

Could be involved in septation. The chain is Putative septation protein SpoVG from Myxococcus xanthus (strain DK1622).